A 321-amino-acid polypeptide reads, in one-letter code: ATP-dependent 6-phosphofructokinase (321 aa).

G12 lines the ATP pocket. 22–26 (RGVVR) is a binding site for ADP. ATP-binding positions include 73–74 (RF) and 103–106 (GDGS). Position 104 (D104) interacts with Mg(2+). 127–129 (TID) is a substrate binding site. Residue D129 is the Proton acceptor of the active site. An ADP-binding site is contributed by R156. Residues R164 and 171–173 (MGR) each bind substrate. ADP-binding positions include 187–189 (GCE), K213, and 215–217 (KRH). Substrate-binding positions include E224, R245, and 251–254 (HTQR).

It belongs to the phosphofructokinase type A (PFKA) family. ATP-dependent PFK group I subfamily. Prokaryotic clade 'B1' sub-subfamily. As to quaternary structure, homotetramer. Mg(2+) serves as cofactor.

It localises to the cytoplasm. The enzyme catalyses beta-D-fructose 6-phosphate + ATP = beta-D-fructose 1,6-bisphosphate + ADP + H(+). The protein operates within carbohydrate degradation; glycolysis; D-glyceraldehyde 3-phosphate and glycerone phosphate from D-glucose: step 3/4. Its activity is regulated as follows. Allosterically activated by ADP and other diphosphonucleosides, and allosterically inhibited by phosphoenolpyruvate. Its function is as follows. Catalyzes the phosphorylation of D-fructose 6-phosphate to fructose 1,6-bisphosphate by ATP, the first committing step of glycolysis. The polypeptide is ATP-dependent 6-phosphofructokinase (Glaesserella parasuis serovar 5 (strain SH0165) (Haemophilus parasuis)).